A 213-amino-acid polypeptide reads, in one-letter code: MKPYQRQFIEFALSKQVLKFGEFTLKSGRKSPYFFNAGLFNTGRDLALLGRFYAEALVDSGIEFDLLFGPAYKGIPIATTTAVALAEHHDLDLPYCFNRKEAKNHGEGGNLVGSALQGRVMLVDDVITAGTAIRESMEIIQANGATLAGVLISLDRQERGRSEISAIQEVERDYNCKVISIITLKDLIAYLEEKPEMAEHLAAVKAYREEFGV.

K26 provides a ligand contact to 5-phospho-alpha-D-ribose 1-diphosphate. 34–35 provides a ligand contact to orotate; sequence FF. Residues 72–73, R99, K100, K103, H105, and 124–132 each bind 5-phospho-alpha-D-ribose 1-diphosphate; these read YK and DDVITAGTA. Residues T128 and R156 each contribute to the orotate site.

It belongs to the purine/pyrimidine phosphoribosyltransferase family. PyrE subfamily. As to quaternary structure, homodimer. It depends on Mg(2+) as a cofactor.

It catalyses the reaction orotidine 5'-phosphate + diphosphate = orotate + 5-phospho-alpha-D-ribose 1-diphosphate. The protein operates within pyrimidine metabolism; UMP biosynthesis via de novo pathway; UMP from orotate: step 1/2. Catalyzes the transfer of a ribosyl phosphate group from 5-phosphoribose 1-diphosphate to orotate, leading to the formation of orotidine monophosphate (OMP). The chain is Orotate phosphoribosyltransferase from Shigella sonnei (strain Ss046).